An 81-amino-acid polypeptide reads, in one-letter code: Acyl carrier protein (81 aa).

The Carrier domain maps to 2-80 (ASNEEILAGL…DAVSYIASAQ (79 aa)). S40 is modified (O-(pantetheine 4'-phosphoryl)serine).

The protein belongs to the acyl carrier protein (ACP) family. Post-translationally, 4'-phosphopantetheine is transferred from CoA to a specific serine of apo-ACP by AcpS. This modification is essential for activity because fatty acids are bound in thioester linkage to the sulfhydryl of the prosthetic group.

The protein localises to the cytoplasm. It participates in lipid metabolism; fatty acid biosynthesis. Carrier of the growing fatty acid chain in fatty acid biosynthesis. The polypeptide is Acyl carrier protein (Renibacterium salmoninarum (strain ATCC 33209 / DSM 20767 / JCM 11484 / NBRC 15589 / NCIMB 2235)).